Here is a 256-residue protein sequence, read N- to C-terminus: Small ribosomal subunit protein eS1 (256 aa).

Ala-2 bears the N-acetylalanine; partial mark.

This sequence belongs to the eukaryotic ribosomal protein eS1 family. As to quaternary structure, component of the small ribosomal subunit. Mature ribosomes consist of a small (40S) and a large (60S) subunit. The 40S subunit contains about 33 different proteins and 1 molecule of RNA (18S). The 60S subunit contains about 49 different proteins and 3 molecules of RNA (25S, 5.8S and 5S).

Its subcellular location is the cytoplasm. The polypeptide is Small ribosomal subunit protein eS1 (rps1) (Sclerotinia sclerotiorum (strain ATCC 18683 / 1980 / Ss-1) (White mold)).